The following is a 559-amino-acid chain: CCR4-NOT transcription complex subunit 6-like (559 aa).

The tract at residues 1 to 148 is required for interaction with cnot1, cnot3 and cnot7; the sequence is MPKEKYDPPD…LYQEPDGTRK (148 aa). The nuclease domain stretch occupies residues 1–550; that stretch reads MPKEKYDPPD…NGLHLPVHST (550 aa). LRR repeat units follow at residues 52-73, 75-96, 98-120, and 121-143; these read HLTA…IAKL, HLVY…LGNM, TLRE…GRLF, and QLQT…YQEP. Glutamate 235 serves as a coordination point for Mg(2+). Positions 235, 271, 353, and 358 each coordinate substrate. Residue aspartate 405 participates in Mg(2+) binding. Aspartate 405 functions as the Proton donor/acceptor in the catalytic mechanism. The substrate site is built by asparagine 407, asparagine 474, and phenylalanine 479.

Belongs to the CCR4/nocturin family. As to quaternary structure, component of the CCR4-NOT complex. It depends on Mg(2+) as a cofactor.

Its subcellular location is the cytoplasm. The protein localises to the nucleus. The enzyme catalyses Exonucleolytic cleavage of poly(A) to 5'-AMP.. Poly(A) nuclease with 3'-5' RNase activity. Catalytic component of the CCR4-NOT complex which is one of the major cellular mRNA deadenylases and is linked to various cellular processes including bulk mRNA degradation, miRNA-mediated repression, translational repression during translational initiation and general transcription regulation. Additional complex functions may be a consequence of its influence on mRNA expression. This Danio rerio (Zebrafish) protein is CCR4-NOT transcription complex subunit 6-like (cnot6l).